A 475-amino-acid polypeptide reads, in one-letter code: Ribulose bisphosphate carboxylase large chain (475 aa).

Residues 1–2 constitute a propeptide that is removed on maturation; that stretch reads MA. Residue proline 3 is modified to N-acetylproline. At lysine 14 the chain carries N6,N6,N6-trimethyllysine. Substrate is bound by residues asparagine 123 and threonine 173. Lysine 175 (proton acceptor) is an active-site residue. Lysine 177 is a binding site for substrate. Mg(2+) contacts are provided by lysine 201, aspartate 203, and glutamate 204. Lysine 201 is subject to N6-carboxylysine. Histidine 294 (proton acceptor) is an active-site residue. The substrate site is built by arginine 295, histidine 327, and serine 379.

It belongs to the RuBisCO large chain family. Type I subfamily. Heterohexadecamer of 8 large chains and 8 small chains. Mg(2+) serves as cofactor.

It localises to the plastid. It is found in the chloroplast. The catalysed reaction is 2 (2R)-3-phosphoglycerate + 2 H(+) = D-ribulose 1,5-bisphosphate + CO2 + H2O. It carries out the reaction D-ribulose 1,5-bisphosphate + O2 = 2-phosphoglycolate + (2R)-3-phosphoglycerate + 2 H(+). Its function is as follows. RuBisCO catalyzes two reactions: the carboxylation of D-ribulose 1,5-bisphosphate, the primary event in carbon dioxide fixation, as well as the oxidative fragmentation of the pentose substrate in the photorespiration process. Both reactions occur simultaneously and in competition at the same active site. This Nephroselmis olivacea (Green alga) protein is Ribulose bisphosphate carboxylase large chain.